The chain runs to 220 residues: Deoxyribose-phosphate aldolase (220 aa).

The active-site Proton donor/acceptor is the D89. K151 acts as the Schiff-base intermediate with acetaldehyde in catalysis. The active-site Proton donor/acceptor is the K180.

Belongs to the DeoC/FbaB aldolase family. DeoC type 1 subfamily.

It localises to the cytoplasm. The enzyme catalyses 2-deoxy-D-ribose 5-phosphate = D-glyceraldehyde 3-phosphate + acetaldehyde. It functions in the pathway carbohydrate degradation; 2-deoxy-D-ribose 1-phosphate degradation; D-glyceraldehyde 3-phosphate and acetaldehyde from 2-deoxy-alpha-D-ribose 1-phosphate: step 2/2. In terms of biological role, catalyzes a reversible aldol reaction between acetaldehyde and D-glyceraldehyde 3-phosphate to generate 2-deoxy-D-ribose 5-phosphate. This is Deoxyribose-phosphate aldolase from Streptococcus pneumoniae serotype 19F (strain G54).